Here is a 407-residue protein sequence, read N- to C-terminus: MSKLYVGSEVGQLRRVLLNRPERALTHLTPSNCHELLFDDVLAVEAAGEEHDAFARTLREQDVEVLLLHDLLVETLAVPEAKQWLLNTQISDFRYGPTFARDLRQYLLEMDDEHLATILLGGLAYSELPIQSSSMLPKMKRPLDFVIEPLPNHLFTRDTSCWVYGGVSLNPMMMPARQRETNHLRAIYRWHPIFAGQDFIKYFGDDDLHYDNANVEGGDVLVIGKGAVLIGMSERTTPQGVENLAASLFKAGQASEVIAIDLPKHRSCMHLDTVMTHMDVDTFSVYPEIMRKDLDTWRLTPKGTDGEMHVEASHNYLHAIESALGLDQLKIITTGGDSYEAEREQWNDANNVLTVKPGVVIGYERNVYTNEKYDKAGIQVLTVPGNELGRGRGGARCMSCPIERDDI.

The active-site Amidino-cysteine intermediate is C397.

The protein belongs to the arginine deiminase family.

The protein localises to the cytoplasm. The enzyme catalyses L-arginine + H2O = L-citrulline + NH4(+). It participates in amino-acid degradation; L-arginine degradation via ADI pathway; carbamoyl phosphate from L-arginine: step 1/2. This Vibrio parahaemolyticus serotype O3:K6 (strain RIMD 2210633) protein is Arginine deiminase.